A 396-amino-acid chain; its full sequence is Elongation factor Tu (396 aa).

The tr-type G domain occupies 11–205; the sequence is KPHVNIGTIG…TIDEYIPTPV (195 aa). The interval 20-27 is G1; the sequence is GHVDHGKT. GTP is bound at residue 20–27; that stretch reads GHVDHGKT. A Mg(2+)-binding site is contributed by T27. A G2 region spans residues 61–65; that stretch reads GITIN. Residues 82-85 are G3; that stretch reads DAPG. GTP contacts are provided by residues 82–86 and 137–140; these read DAPGH and NKTD. Positions 137 to 140 are G4; sequence NKTD. Positions 175–177 are G5; it reads SAL.

The protein belongs to the TRAFAC class translation factor GTPase superfamily. Classic translation factor GTPase family. EF-Tu/EF-1A subfamily. Monomer.

It localises to the cytoplasm. The enzyme catalyses GTP + H2O = GDP + phosphate + H(+). In terms of biological role, GTP hydrolase that promotes the GTP-dependent binding of aminoacyl-tRNA to the A-site of ribosomes during protein biosynthesis. The protein is Elongation factor Tu of Lacticaseibacillus casei (strain BL23) (Lactobacillus casei).